An 828-amino-acid chain; its full sequence is Leucine--tRNA ligase (828 aa).

The 'HIGH' region motif lies at 36 to 46 (PYPSGKIHIGH). The 'KMSKS' region signature appears at 595–599 (KMSKS). K598 contacts ATP.

Belongs to the class-I aminoacyl-tRNA synthetase family.

It localises to the cytoplasm. The catalysed reaction is tRNA(Leu) + L-leucine + ATP = L-leucyl-tRNA(Leu) + AMP + diphosphate. In Rickettsia typhi (strain ATCC VR-144 / Wilmington), this protein is Leucine--tRNA ligase.